Reading from the N-terminus, the 256-residue chain is Cell division protein DivIB (256 aa).

At 1-30 (MNNSKVIKLQDRVPKLKNQKKKNKKNVNHR) the chain is on the cytoplasmic side. The helical transmembrane segment at 31–51 (LILYISILFLLVLFLIYFRSP) threads the bilayer. Residues 52–256 (LSNIKKISVF…KELGAEEKKE (205 aa)) are Extracellular-facing. The 69-residue stretch at 53–121 (SNIKKISVFG…NNIDIHIEEY (69 aa)) folds into the POTRA domain.

Belongs to the FtsQ/DivIB family. DivIB subfamily.

It is found in the cell membrane. In terms of biological role, cell division protein that may be involved in stabilizing or promoting the assembly of the division complex. The sequence is that of Cell division protein DivIB from Bacillus cereus (strain ATCC 14579 / DSM 31 / CCUG 7414 / JCM 2152 / NBRC 15305 / NCIMB 9373 / NCTC 2599 / NRRL B-3711).